A 369-amino-acid polypeptide reads, in one-letter code: Choline kinase B2 (369 aa).

The protein belongs to the choline/ethanolamine kinase family. Mg(2+) serves as cofactor.

The catalysed reaction is choline + ATP = phosphocholine + ADP + H(+). The protein operates within phospholipid metabolism; phosphatidylcholine biosynthesis; phosphocholine from choline: step 1/1. In terms of biological role, catalyzes the first step in phosphatidylcholine biosynthesis. Phosphorylates choline. The protein is Choline kinase B2 (ckb-2) of Caenorhabditis elegans.